A 137-amino-acid chain; its full sequence is L-ectoine synthase (137 aa).

The interval 115-137 is disordered; it reads EVHDESGAYPADPELAREPVAAD.

The protein belongs to the ectoine synthase family.

The enzyme catalyses (2S)-4-acetamido-2-aminobutanoate = L-ectoine + H2O. It functions in the pathway amine and polyamine biosynthesis; ectoine biosynthesis; L-ectoine from L-aspartate 4-semialdehyde: step 3/3. In terms of biological role, catalyzes the circularization of gamma-N-acetyl-alpha,gamma-diaminobutyric acid (ADABA) to ectoine (1,4,5,6-tetrahydro-2-methyl-4-pyrimidine carboxylic acid), which is an excellent osmoprotectant. In Sphingopyxis alaskensis (strain DSM 13593 / LMG 18877 / RB2256) (Sphingomonas alaskensis), this protein is L-ectoine synthase.